A 224-amino-acid polypeptide reads, in one-letter code: Lipoprotein-releasing system ATP-binding protein LolD (224 aa).

The region spanning V6–E224 is the ABC transporter domain. G42–S49 serves as a coordination point for ATP.

It belongs to the ABC transporter superfamily. Lipoprotein translocase (TC 3.A.1.125) family. The complex is composed of two ATP-binding proteins (LolD) and two transmembrane proteins (LolC and LolE).

Its subcellular location is the cell inner membrane. Its function is as follows. Part of the ABC transporter complex LolCDE involved in the translocation of mature outer membrane-directed lipoproteins, from the inner membrane to the periplasmic chaperone, LolA. Responsible for the formation of the LolA-lipoprotein complex in an ATP-dependent manner. This chain is Lipoprotein-releasing system ATP-binding protein LolD, found in Novosphingobium aromaticivorans (strain ATCC 700278 / DSM 12444 / CCUG 56034 / CIP 105152 / NBRC 16084 / F199).